Reading from the N-terminus, the 168-residue chain is 3-isopropylmalate dehydratase small subunit (168 aa).

The protein belongs to the LeuD family. LeuD type 2 subfamily. As to quaternary structure, heterodimer of LeuC and LeuD.

It carries out the reaction (2R,3S)-3-isopropylmalate = (2S)-2-isopropylmalate. Its pathway is amino-acid biosynthesis; L-leucine biosynthesis; L-leucine from 3-methyl-2-oxobutanoate: step 2/4. In terms of biological role, catalyzes the isomerization between 2-isopropylmalate and 3-isopropylmalate, via the formation of 2-isopropylmaleate. This Aquifex aeolicus (strain VF5) protein is 3-isopropylmalate dehydratase small subunit (leuD).